Here is a 388-residue protein sequence, read N- to C-terminus: Flavin-dependent monooxygenase (388 aa).

FAD is bound by residues 26–27 and 45–48; these read PV and YERD. R54 contributes to the NADPH binding site. Positions 61, 117, and 139 each coordinate FAD. 2 residues coordinate substrate: Q192 and R213. FAD-binding positions include D311 and 321–324; that span reads GQGV.

This sequence belongs to the aromatic-ring hydroxylase family. TetX subfamily. In terms of assembly, monomer. FAD is required as a cofactor.

It is found in the cytoplasm. It carries out the reaction a tetracycline + NADPH + O2 + H(+) = an 11a-hydroxytetracycline + NADP(+) + H2O. The enzyme catalyses tetracycline + NADPH + O2 + H(+) = 11a-hydroxytetracycline + NADP(+) + H2O. It catalyses the reaction tigecycline + NADPH + O2 + H(+) = 11a-hydroxytigecycline + NADP(+) + H2O. The catalysed reaction is oxytetracycline + NADPH + O2 + H(+) = 11a-hydroxy-oxytetracycline + NADP(+) + H2O. Anhydrotetracycline, a poor substrate, prevents tetracycline degradation in vitro. In terms of biological role, an FAD-requiring monooxygenase active on tetracycline antibiotic derivatives, which leads to their inactivation. Hydroxylates carbon 11a of oxytetracycline and tigecycline. Acts on many tetracycline analogs (chlorotetracycline, demeclocycline, doxycycline, minocycline, oxytetracyclinee), probably by monooxygenization. Tigecycline, a new generation tetracycline antibiotic, is rendered less effective against E.coli by this monooxygenation, is much weaker at inhibiting translation in vitro and binds Mg(2+) considerably less well. Expression in E.coli BW25113 reduces its growth rate about 5%. The reaction probably proceeds by FAD reduction by NADPH and, second, hydroxylation of antibiotic in a ping-pong mechanism. Degrades chlortetracycline, probably by monooxygenation. Slowly oxidizes anhydrotetracycline, the final substrate in tetracycline biosynthesis. In Bacteroides thetaiotaomicron, this protein is Flavin-dependent monooxygenase.